The primary structure comprises 361 residues: tRNA/tmRNA (uracil-C(5))-methyltransferase (361 aa).

5 residues coordinate S-adenosyl-L-methionine: Q183, Y211, N216, E232, and D294. Catalysis depends on C319, which acts as the Nucleophile. Residue E353 is the Proton acceptor of the active site.

It belongs to the class I-like SAM-binding methyltransferase superfamily. RNA M5U methyltransferase family. TrmA subfamily.

The catalysed reaction is uridine(54) in tRNA + S-adenosyl-L-methionine = 5-methyluridine(54) in tRNA + S-adenosyl-L-homocysteine + H(+). It catalyses the reaction uridine(341) in tmRNA + S-adenosyl-L-methionine = 5-methyluridine(341) in tmRNA + S-adenosyl-L-homocysteine + H(+). Functionally, dual-specificity methyltransferase that catalyzes the formation of 5-methyluridine at position 54 (m5U54) in all tRNAs, and that of position 341 (m5U341) in tmRNA (transfer-mRNA). This Acinetobacter baumannii (strain ACICU) protein is tRNA/tmRNA (uracil-C(5))-methyltransferase.